A 407-amino-acid chain; its full sequence is Arginine biosynthesis bifunctional protein ArgJ (407 aa).

6 residues coordinate substrate: threonine 169, lysine 192, threonine 203, glutamate 283, asparagine 402, and serine 407. Residue threonine 203 is the Nucleophile of the active site.

This sequence belongs to the ArgJ family. Heterotetramer of two alpha and two beta chains.

It is found in the cytoplasm. It catalyses the reaction N(2)-acetyl-L-ornithine + L-glutamate = N-acetyl-L-glutamate + L-ornithine. The catalysed reaction is L-glutamate + acetyl-CoA = N-acetyl-L-glutamate + CoA + H(+). It participates in amino-acid biosynthesis; L-arginine biosynthesis; L-ornithine and N-acetyl-L-glutamate from L-glutamate and N(2)-acetyl-L-ornithine (cyclic): step 1/1. It functions in the pathway amino-acid biosynthesis; L-arginine biosynthesis; N(2)-acetyl-L-ornithine from L-glutamate: step 1/4. Catalyzes two activities which are involved in the cyclic version of arginine biosynthesis: the synthesis of N-acetylglutamate from glutamate and acetyl-CoA as the acetyl donor, and of ornithine by transacetylation between N(2)-acetylornithine and glutamate. The polypeptide is Arginine biosynthesis bifunctional protein ArgJ (Mycobacterium leprae (strain TN)).